The sequence spans 138 residues: Ribosome-binding factor A (138 aa).

The span at 1–20 shows a compositional bias: low complexity; it reads MSSRPPSSSGPAGIPKGAPS. The interval 1–21 is disordered; the sequence is MSSRPPSSSGPAGIPKGAPSQ.

This sequence belongs to the RbfA family. As to quaternary structure, monomer. Binds 30S ribosomal subunits, but not 50S ribosomal subunits or 70S ribosomes.

It is found in the cytoplasm. In terms of biological role, one of several proteins that assist in the late maturation steps of the functional core of the 30S ribosomal subunit. Associates with free 30S ribosomal subunits (but not with 30S subunits that are part of 70S ribosomes or polysomes). Required for efficient processing of 16S rRNA. May interact with the 5'-terminal helix region of 16S rRNA. In Granulibacter bethesdensis (strain ATCC BAA-1260 / CGDNIH1), this protein is Ribosome-binding factor A.